The chain runs to 186 residues: ADP-ribosylation factor-like protein 8B-A (186 aa).

Positions 1-19 (MLALINRLLDWFKSLFWKE) form an intramembrane region, note=Mediates targeting to membranes. GTP contacts are provided by residues 29 to 35 (QYSGKTT), 71 to 75 (DIGGQ), and 130 to 133 (NKRD).

The protein belongs to the small GTPase superfamily. Arf family.

Its subcellular location is the late endosome membrane. It localises to the lysosome membrane. It is found in the cytoplasm. The protein resides in the cytoskeleton. The protein localises to the spindle. Its subcellular location is the early endosome membrane. Small GTPase which cycles between active GTP-bound and inactive GDP-bound states. In its active state, binds to a variety of effector proteins playing a key role in the regulation of lysosomal positioning which is important for nutrient sensing, natural killer cell-mediated cytotoxicity and antigen presentation. Along with its effectors, orchestrates lysosomal transport and fusion. The chain is ADP-ribosylation factor-like protein 8B-A (arl8ba) from Danio rerio (Zebrafish).